A 321-amino-acid chain; its full sequence is Phospho-N-acetylmuramoyl-pentapeptide-transferase (321 aa).

10 helical membrane passes run 1–21 (MIYV…PILI), 49–69 (TMGG…AIIF), 77–97 (ILLL…DYII), 112–132 (FLAQ…FNMI), 140–160 (IPFT…IVFW), 176–196 (GLAT…SFML), 200–220 (AVGT…IYNV), 225–245 (VFMG…VSIM), 250–270 (ISLI…ILQV), and 300–320 (VVSV…WIGV).

It belongs to the glycosyltransferase 4 family. MraY subfamily. Mg(2+) is required as a cofactor.

The protein resides in the cell membrane. The enzyme catalyses UDP-N-acetyl-alpha-D-muramoyl-L-alanyl-gamma-D-glutamyl-L-lysyl-D-alanyl-D-alanine + di-trans,octa-cis-undecaprenyl phosphate = Mur2Ac(oyl-L-Ala-gamma-D-Glu-L-Lys-D-Ala-D-Ala)-di-trans,octa-cis-undecaprenyl diphosphate + UMP. Its pathway is cell wall biogenesis; peptidoglycan biosynthesis. Catalyzes the initial step of the lipid cycle reactions in the biosynthesis of the cell wall peptidoglycan: transfers peptidoglycan precursor phospho-MurNAc-pentapeptide from UDP-MurNAc-pentapeptide onto the lipid carrier undecaprenyl phosphate, yielding undecaprenyl-pyrophosphoryl-MurNAc-pentapeptide, known as lipid I. This Staphylococcus carnosus (strain TM300) protein is Phospho-N-acetylmuramoyl-pentapeptide-transferase.